A 228-amino-acid chain; its full sequence is Outer membrane protein assembly factor BamE (228 aa).

The first 29 residues, 1–29 (MNPILKGVYSPARLGVVALTLFGILGVTG), serve as a signal peptide directing secretion. Residue Cys30 is the site of N-palmitoyl cysteine attachment. Cys30 carries S-diacylglycerol cysteine lipidation. A disordered region spans residues 197 to 228 (DFFGSSKKDPDPQSPQLGPGTLNDVPKPADSK).

It belongs to the BamE family. As to quaternary structure, part of the Bam complex.

It localises to the cell outer membrane. In terms of biological role, part of the outer membrane protein assembly complex, which is involved in assembly and insertion of beta-barrel proteins into the outer membrane. This Polynucleobacter necessarius subsp. necessarius (strain STIR1) protein is Outer membrane protein assembly factor BamE.